Here is a 2534-residue protein sequence, read N- to C-terminus: Highly reducing polyketide synthase easB (2534 aa).

A disordered region spans residues 1–49 (MSPASRSRVEIADSESDSERLSSSPWSILSDNDSNTSDERSTRAGPGSL). Residues 49 to 470 (LEPIAVIGIG…GTNAHVIIDA (422 aa)) enclose the Ketosynthase family 3 (KS3) domain. Catalysis depends on for beta-ketoacyl synthase activity residues cysteine 222, histidine 356, and histidine 396. The malonyl-CoA:ACP transacylase (MAT) domain stretch occupies residues 587 to 885 (IFSGQGAQYA…LSGPVNQILK (299 aa)). Positions 973–1111 (HELLGTLSAD…GLVQAEVDSV (139 aa)) are N-terminal hotdog fold. The tract at residues 973 to 1273 (HELLGTLSAD…QGIRVTSLGG (301 aa)) is dehydratase (DH) domain. Residues 973–1277 (HELLGTLSAD…VTSLGGDVAA (305 aa)) form the PKS/mFAS DH domain. Histidine 1005 acts as the Proton acceptor; for dehydratase activity in catalysis. The C-terminal hotdog fold stretch occupies residues 1131–1277 (THGTIPQKFY…VTSLGGDVAA (147 aa)). The active-site Proton donor; for dehydratase activity is the aspartate 1193. A methyltransferase (CMet) domain region spans residues 1395–1625 (KTSALSLLTK…VFISTAPFPR (231 aa)). The segment at 1834 to 2146 (GLLETIRWKD…AGKHTGKIVL (313 aa)) is enoyl reductase (ER) domain. One can recognise a Carrier domain in the interval 2452 to 2529 (EAVHIVTNAI…QLAAIVAKES (78 aa)). Residues 2453–2526 (AVHIVTNAIL…SISQLAAIVA (74 aa)) form a ketoreductase (KR) domain region. Serine 2489 is subject to O-(pantetheine 4'-phosphoryl)serine.

The protein operates within antibiotic biosynthesis. Its function is as follows. Polyketide synthase; part of the gene cluster that mediates the biosynthesis of emericellamides, secondary metabolites acting as antibiotics. The biosynthesis of emericellamides initiates from the highly reducing polyketide synthase easB which catalyzes the formation of the linear polyketide chain. EasB produces several polyketides that can be further processed by the downstream enzymes. The polyketides are released from easB as linear polyketide carboxylic acids, which are converted to CoA thioesters by the acyl-CoA ligase easD. The substrates are then loaded onto the acyltransferase easC, which shuttles them to the first thiolation (T) domain of the nonribosomal peptide synthetase easA. EasA then performs condensation of the polyketides with one glycine, two alanine, one valine and one leucine residues. A last step of cyclization leads to the production of emericellamides. This Emericella nidulans (strain FGSC A4 / ATCC 38163 / CBS 112.46 / NRRL 194 / M139) (Aspergillus nidulans) protein is Highly reducing polyketide synthase easB.